We begin with the raw amino-acid sequence, 95 residues long: Acylphosphatase (95 aa).

The region spanning 7-93 (TWQLFAHGRV…QLFDRFDWLP (87 aa)) is the Acylphosphatase-like domain. Active-site residues include Arg-22 and Asn-40.

This sequence belongs to the acylphosphatase family.

It catalyses the reaction an acyl phosphate + H2O = a carboxylate + phosphate + H(+). The polypeptide is Acylphosphatase (acyP) (Cupriavidus metallidurans (strain ATCC 43123 / DSM 2839 / NBRC 102507 / CH34) (Ralstonia metallidurans)).